The chain runs to 157 residues: Rieske domain-containing protein (157 aa).

The residue at position 1 (Met-1) is an N-acetylmethionine. A Phosphoserine modification is found at Ser-6. 2 consecutive Rieske domains span residues 16-94 (SSVC…TGEG) and 17-131 (SVCV…NIYV). [2Fe-2S] cluster is bound by residues Cys-57, His-59, Cys-80, and His-83.

[2Fe-2S] cluster is required as a cofactor.

The protein is Rieske domain-containing protein (RFESD) of Homo sapiens (Human).